A 597-amino-acid chain; its full sequence is Aspartate--tRNA(Asp/Asn) ligase (597 aa).

Position 170 (glutamate 170) interacts with L-aspartate. The tract at residues 194 to 197 (QLFK) is aspartate. Arginine 216 serves as a coordination point for L-aspartate. ATP is bound by residues 216–218 (RDE) and glutamine 225. Residue histidine 448 coordinates L-aspartate. Position 482 (glutamate 482) interacts with ATP. Arginine 489 serves as a coordination point for L-aspartate. Residue 534–537 (GWDR) participates in ATP binding. Residues 558 to 597 (GGGVDPLTDAPAPITAAQRKESGIDAKPEKAEKAGKPADA) form a disordered region. Residues 575-597 (QRKESGIDAKPEKAEKAGKPADA) are compositionally biased toward basic and acidic residues.

This sequence belongs to the class-II aminoacyl-tRNA synthetase family. Type 1 subfamily. As to quaternary structure, homodimer.

The protein localises to the cytoplasm. It catalyses the reaction tRNA(Asx) + L-aspartate + ATP = L-aspartyl-tRNA(Asx) + AMP + diphosphate. In terms of biological role, aspartyl-tRNA synthetase with relaxed tRNA specificity since it is able to aspartylate not only its cognate tRNA(Asp) but also tRNA(Asn). Reaction proceeds in two steps: L-aspartate is first activated by ATP to form Asp-AMP and then transferred to the acceptor end of tRNA(Asp/Asn). The protein is Aspartate--tRNA(Asp/Asn) ligase of Mycobacteroides abscessus (strain ATCC 19977 / DSM 44196 / CCUG 20993 / CIP 104536 / JCM 13569 / NCTC 13031 / TMC 1543 / L948) (Mycobacterium abscessus).